The primary structure comprises 204 residues: MNQDIYTYLHQLQQALQTQQAAILNLEDQVRQLQEELNELKNRPSSSVGKVEYKFDQLKVENLNGTLNIGLNPFSAKGQQIEDLQVDTETLKVNPETETNPDFYQGILQEMHRYLDEEAYNRILHFEQEERTPLDEMYRQMMVDDIKKQMEHRLPYYLSQAQSYEGISTDPDYLRDIIIQAMKQDIDKAFLSFIQHIPGNFRKE.

In terms of biological role, required for the formation of functionally normal spores. Could be involved in the establishment of normal spore coat structure and/or permeability, which allows the access of germinants to their receptor. The sequence is that of Probable spore germination protein GerPC (gerPC) from Bacillus cereus.